The following is a 149-amino-acid chain: MERTFLAVKPDGVQRGLVGEIISRYEAKGFTLVGLKLMVVSRELAEQHYGEHKEKPFFSGLVDFITSGPVVAMVWEGKGVVAAARKIIGATNPLGSEPGTIRGDFGIDIGRNIIHGSDAVETAQREISLWFKSEELADWSPTLTSWIYE.

Residues Lys-9, Phe-57, Arg-85, Thr-91, Arg-102, and Asn-112 each coordinate ATP. The active-site Pros-phosphohistidine intermediate is His-115.

Belongs to the NDK family. As to quaternary structure, homotetramer. Requires Mg(2+) as cofactor.

The protein resides in the cytoplasm. The catalysed reaction is a 2'-deoxyribonucleoside 5'-diphosphate + ATP = a 2'-deoxyribonucleoside 5'-triphosphate + ADP. It carries out the reaction a ribonucleoside 5'-diphosphate + ATP = a ribonucleoside 5'-triphosphate + ADP. Major role in the synthesis of nucleoside triphosphates other than ATP. The ATP gamma phosphate is transferred to the NDP beta phosphate via a ping-pong mechanism, using a phosphorylated active-site intermediate. The polypeptide is Nucleoside diphosphate kinase (Acaryochloris marina (strain MBIC 11017)).